The primary structure comprises 370 residues: Phosphate acyltransferase (370 aa).

It belongs to the PlsX family. In terms of assembly, homodimer. Probably interacts with PlsY.

Its subcellular location is the cytoplasm. The catalysed reaction is a fatty acyl-[ACP] + phosphate = an acyl phosphate + holo-[ACP]. Its pathway is lipid metabolism; phospholipid metabolism. Its function is as follows. Catalyzes the reversible formation of acyl-phosphate (acyl-PO(4)) from acyl-[acyl-carrier-protein] (acyl-ACP). This enzyme utilizes acyl-ACP as fatty acyl donor, but not acyl-CoA. The sequence is that of Phosphate acyltransferase from Polaromonas naphthalenivorans (strain CJ2).